The sequence spans 210 residues: ATP-dependent Clp protease proteolytic subunit 1 (210 aa).

S106 acts as the Nucleophile in catalysis. Residue H131 is part of the active site.

Belongs to the peptidase S14 family. In terms of assembly, fourteen ClpP subunits assemble into 2 heptameric rings which stack back to back to give a disk-like structure with a central cavity, resembling the structure of eukaryotic proteasomes.

Its subcellular location is the cytoplasm. It carries out the reaction Hydrolysis of proteins to small peptides in the presence of ATP and magnesium. alpha-casein is the usual test substrate. In the absence of ATP, only oligopeptides shorter than five residues are hydrolyzed (such as succinyl-Leu-Tyr-|-NHMec, and Leu-Tyr-Leu-|-Tyr-Trp, in which cleavage of the -Tyr-|-Leu- and -Tyr-|-Trp bonds also occurs).. Functionally, cleaves peptides in various proteins in a process that requires ATP hydrolysis. Has a chymotrypsin-like activity. Plays a major role in the degradation of misfolded proteins. In Chelativorans sp. (strain BNC1), this protein is ATP-dependent Clp protease proteolytic subunit 1.